Consider the following 62-residue polypeptide: Temporin-HN1 (62 aa).

An N-terminal signal peptide occupies residues 1–22 (MFTLKKSLLLLLFLGTINLSLS). Positions 23–44 (EQERNAEEERRDDPEEMDAEVE) are excised as a propeptide. The residue at position 60 (Leu60) is a Leucine amide.

In terms of tissue distribution, expressed by the skin glands.

Its subcellular location is the secreted. Has antimicrobial activity against some Gram-positive bacteria and fungi but has no activity against a range of Gram-negative bacteria except P.faecalis. Active against the Gram-positive bacteria S.aureus ATCC 25923 (MIC=37.5 uM), S.carnosus KHS (MIC=37.5 uM), B.licheniformis X39 (MIC=19 uM), R.rhodochrous X15 (MIC=4.8 uM), is virtually inactive against E.faecalis 981 (MIC=150 uM) and inactive against E.faecium 091299. Has some antimicrobial activity against the Gram-negative bacterium P.faecalis X29 (MIC=75 uM) and is inactive against E.coli, P.aeruginosa and S.typhi. Has antifungal activity against C.albicans ATCC 2002 (MIC=19 uM) and lower activity against the slime mold 090223 (MIC=75 uM). Has low hemolytic activity against human erythrocytes (LC(50)=75 uM). This chain is Temporin-HN1, found in Odorrana hainanensis (Odor frog).